The following is a 461-amino-acid chain: RNA-binding protein ZCH321 (461 aa).

C3H1-type zinc fingers lie at residues 63–85 (LCQL…HAAL) and 181–208 (ACDF…HICK). Residues 224–243 (TSQARDGGEPGPRGAKKGSV) are disordered. The MKT1-binding motif motif lies at 446-451 (WQHNPY).

Functionally, RNA-binding protein involved in regulation of mRNA stability. Promotes mRNA stabilization by recruiting MKT1 and PBP1. Stabilizes transcripts encoding mitochondrial proteins. This is RNA-binding protein ZCH321 from Trypanosoma brucei brucei (strain 927/4 GUTat10.1).